A 586-amino-acid chain; its full sequence is Clathrin heavy chain linker domain-containing protein 1 (586 aa).

The stretch at 174–232 forms a coiled coil; sequence MNLDALTKYMKHLEDKYAEIKQAMLIKYVPAQRKADLDEEMIVLLKRRDVAENLNKKLQ.

This is Clathrin heavy chain linker domain-containing protein 1 (CLHC1) from Homo sapiens (Human).